A 238-amino-acid polypeptide reads, in one-letter code: Ribosomal RNA small subunit methyltransferase G (238 aa).

Residues G77, F82, 128–129, and R147 each bind S-adenosyl-L-methionine; that span reads AE.

Belongs to the methyltransferase superfamily. RNA methyltransferase RsmG family.

Its subcellular location is the cytoplasm. In terms of biological role, specifically methylates the N7 position of guanine in position 535 of 16S rRNA. In Listeria monocytogenes serotype 4b (strain F2365), this protein is Ribosomal RNA small subunit methyltransferase G.